We begin with the raw amino-acid sequence, 143 residues long: NADH-quinone oxidoreductase subunit A (143 aa).

A run of 3 helical transmembrane segments spans residues 8-28, 63-83, and 93-113; these read FGNV…GYLT, FYVV…LFPW, and FALI…VYAW.

It belongs to the complex I subunit 3 family. As to quaternary structure, NDH-1 is composed of 14 different subunits. Subunits NuoA, H, J, K, L, M, N constitute the membrane sector of the complex.

It is found in the cell inner membrane. The enzyme catalyses a quinone + NADH + 5 H(+)(in) = a quinol + NAD(+) + 4 H(+)(out). Its function is as follows. NDH-1 shuttles electrons from NADH, via FMN and iron-sulfur (Fe-S) centers, to quinones in the respiratory chain. The immediate electron acceptor for the enzyme in this species is believed to be a menaquinone. Couples the redox reaction to proton translocation (for every two electrons transferred, four hydrogen ions are translocated across the cytoplasmic membrane), and thus conserves the redox energy in a proton gradient. This chain is NADH-quinone oxidoreductase subunit A, found in Chlorobium luteolum (strain DSM 273 / BCRC 81028 / 2530) (Pelodictyon luteolum).